The primary structure comprises 303 residues: Endo-1,3;1,4-beta-D-glucanase (303 aa).

A signal peptide spans 1-43; sequence MPSSAQVLLCLAAVLAAAAATTAEAHSQCLDNPPDRSIHGRQL. Asn115, Asn197, and Asn257 each carry an N-linked (GlcNAc...) asparagine glycan.

Post-translationally, glycosylated.

The protein localises to the secreted. Plays a role in control of plant growth. Mediates specific degradation of cell wall (1,3)(1,4)-beta-D-glucans and is related to auxin-mediated growth and development of cereal coleoptiles. The protein is Endo-1,3;1,4-beta-D-glucanase of Zea mays (Maize).